Consider the following 120-residue polypeptide: NAD(P)H-quinone oxidoreductase subunit 3, chloroplastic (120 aa).

The next 3 helical transmembrane spans lie at 14 to 34 (LIIS…LAPI), 64 to 84 (MFAL…PWAM), and 88 to 108 (ILGV…IVGL).

It belongs to the complex I subunit 3 family. In terms of assembly, NDH is composed of at least 16 different subunits, 5 of which are encoded in the nucleus.

The protein resides in the plastid. It is found in the chloroplast thylakoid membrane. The enzyme catalyses a plastoquinone + NADH + (n+1) H(+)(in) = a plastoquinol + NAD(+) + n H(+)(out). It carries out the reaction a plastoquinone + NADPH + (n+1) H(+)(in) = a plastoquinol + NADP(+) + n H(+)(out). Its function is as follows. NDH shuttles electrons from NAD(P)H:plastoquinone, via FMN and iron-sulfur (Fe-S) centers, to quinones in the photosynthetic chain and possibly in a chloroplast respiratory chain. The immediate electron acceptor for the enzyme in this species is believed to be plastoquinone. Couples the redox reaction to proton translocation, and thus conserves the redox energy in a proton gradient. This Coffea arabica (Arabian coffee) protein is NAD(P)H-quinone oxidoreductase subunit 3, chloroplastic.